The chain runs to 295 residues: Tissue factor (295 aa).

Residues 1–32 (METPAWPRVPRPETAVARTLLLGWVFAQVAGA) form the signal peptide. The Extracellular portion of the chain corresponds to 33 to 251 (SGTTNTVAAY…MGQEKGEFRE (219 aa)). Short sequence motifs (WKS motif) lie at residues 46-48 (WKS) and 77-79 (WKS). An intrachain disulfide couples C81 to C89. N156 and N169 each carry an N-linked (GlcNAc...) asparagine glycan. The WKS motif signature appears at 190 to 192 (WKS). A disulfide bridge links C218 with C241. The helical transmembrane segment at 252–274 (IFYIIGAVVFVVIILVIILAISL) threads the bilayer. Residues 275-295 (HKCRKAGVGQSWKENSPLNVS) are Cytoplasmic-facing. C277 carries the S-palmitoyl cysteine lipid modification.

This sequence belongs to the tissue factor family. Interacts with HSPE; the interaction, inhibited by heparin, promotes the generation of activated factor X and activates coagulation in the presence of activated factor VII. As to expression, lung, placenta and pancreas.

The protein localises to the membrane. It is found in the secreted. Functionally, initiates blood coagulation by forming a complex with circulating factor VII or VIIa. The [TF:VIIa] complex activates factors IX or X by specific limited proteolysis. TF plays a role in normal hemostasis by initiating the cell-surface assembly and propagation of the coagulation protease cascade. In Homo sapiens (Human), this protein is Tissue factor (F3).